The following is a 362-amino-acid chain: Heat-inducible transcription repressor HrcA (362 aa).

Belongs to the HrcA family.

In terms of biological role, negative regulator of class I heat shock genes (grpE-dnaK-dnaJ and groELS operons). Prevents heat-shock induction of these operons. The sequence is that of Heat-inducible transcription repressor HrcA from Rhizobium etli (strain CIAT 652).